Reading from the N-terminus, the 247-residue chain is Trypsin-2 (247 aa).

The N-terminal stretch at 1–15 (MNLLLILTFVAAAVA) is a signal peptide. The propeptide at 16–23 (APFDDDDK) is activation peptide. Residues 24–244 (IVGGYICEEN…YVDWIKDTIA (221 aa)) form the Peptidase S1 domain. Intrachain disulfides connect Cys30/Cys160, Cys48/Cys64, Cys171/Cys185, and Cys196/Cys220. His63 acts as the Charge relay system in catalysis. The Ca(2+) site is built by Glu75, Asn77, Val80, and Glu85. Asp107 functions as the Charge relay system in the catalytic mechanism. Position 154 is a sulfotyrosine (Tyr154). The active-site Charge relay system is the Ser200.

This sequence belongs to the peptidase S1 family. Requires Ca(2+) as cofactor. In terms of processing, sulfated on tyrosine. Post-translationally, sulfation at Tyr-154 increases selectivity towards basic versus apolar residues at the P2' position of inhibitors that bind in a substrate-like fashion. Although the increase in selectivity is relatively small, it may facilitate digestion of a broader range of dietary proteins. In terms of tissue distribution, expressed in Paneth cells, at the base of small intestinal crypts.

The protein resides in the secreted. The protein localises to the extracellular space. The enzyme catalyses Preferential cleavage: Arg-|-Xaa, Lys-|-Xaa.. In terms of biological role, in the ileum, may be involved in defensin processing, including DEFA5. The polypeptide is Trypsin-2 (PRSS2) (Homo sapiens (Human)).